Here is a 252-residue protein sequence, read N- to C-terminus: Imidazole glycerol phosphate synthase subunit HisF (252 aa).

Residues Asp-11 and Asp-130 contribute to the active site.

Belongs to the HisA/HisF family. In terms of assembly, heterodimer of HisH and HisF.

Its subcellular location is the cytoplasm. The enzyme catalyses 5-[(5-phospho-1-deoxy-D-ribulos-1-ylimino)methylamino]-1-(5-phospho-beta-D-ribosyl)imidazole-4-carboxamide + L-glutamine = D-erythro-1-(imidazol-4-yl)glycerol 3-phosphate + 5-amino-1-(5-phospho-beta-D-ribosyl)imidazole-4-carboxamide + L-glutamate + H(+). It participates in amino-acid biosynthesis; L-histidine biosynthesis; L-histidine from 5-phospho-alpha-D-ribose 1-diphosphate: step 5/9. In terms of biological role, IGPS catalyzes the conversion of PRFAR and glutamine to IGP, AICAR and glutamate. The HisF subunit catalyzes the cyclization activity that produces IGP and AICAR from PRFAR using the ammonia provided by the HisH subunit. In Polynucleobacter asymbioticus (strain DSM 18221 / CIP 109841 / QLW-P1DMWA-1) (Polynucleobacter necessarius subsp. asymbioticus), this protein is Imidazole glycerol phosphate synthase subunit HisF.